The chain runs to 129 residues: Small ribosomal subunit protein uS11 (129 aa).

Belongs to the universal ribosomal protein uS11 family. Part of the 30S ribosomal subunit. Interacts with proteins S7 and S18. Binds to IF-3.

Functionally, located on the platform of the 30S subunit, it bridges several disparate RNA helices of the 16S rRNA. Forms part of the Shine-Dalgarno cleft in the 70S ribosome. The chain is Small ribosomal subunit protein uS11 from Nitratidesulfovibrio vulgaris (strain DSM 19637 / Miyazaki F) (Desulfovibrio vulgaris).